Consider the following 518-residue polypeptide: Glutamate--cysteine ligase (518 aa).

Belongs to the glutamate--cysteine ligase type 1 family. Type 1 subfamily.

It catalyses the reaction L-cysteine + L-glutamate + ATP = gamma-L-glutamyl-L-cysteine + ADP + phosphate + H(+). The protein operates within sulfur metabolism; glutathione biosynthesis; glutathione from L-cysteine and L-glutamate: step 1/2. This is Glutamate--cysteine ligase from Shigella dysenteriae serotype 1 (strain Sd197).